A 428-amino-acid polypeptide reads, in one-letter code: AA14 family lytic polysaccharide monooxygenase A (428 aa).

The first 21 residues, 1–21 (MLRSLPASLALVAAFASKASA), serve as a signal peptide directing secretion. Asparagine 34 and asparagine 52 each carry an N-linked (GlcNAc...) asparagine glycan. 5 disulfide bridges follow: cysteine 88–cysteine 112, cysteine 131–cysteine 158, cysteine 174–cysteine 179, cysteine 181–cysteine 203, and cysteine 223–cysteine 239. Residue asparagine 155 is glycosylated (N-linked (GlcNAc...) asparagine). 2 disordered regions span residues 216 to 239 (KPAV…PGNC) and 292 to 428 (SSGT…HNAH). The segment covering 223–232 (CGADPDHGKP) has biased composition (basic and acidic residues). Residue asparagine 238 is glycosylated (N-linked (GlcNAc...) asparagine). A compositionally biased stretch (low complexity) spans 292–379 (SSGTGSSPTS…SVATEASSSP (88 aa)). The span at 380-402 (IASTTVDEAVVSSSTVGSINPTR) shows a compositional bias: polar residues. Basic residues predominate over residues 414-428 (QKKKRKHARHLHNAH).

Cu(2+) is required as a cofactor.

Its subcellular location is the secreted. Its function is as follows. Lytic polysaccharide monooxygenase (LPMO) showing oxidase and peroxidase activities that are common for LPMOs. Catalysis by LPMOs requires the reduction of the active-site copper from Cu(II) to Cu(I) by a reducing agent and H(2)O(2) or O(2) as a cosubstrate. Shows no activity on cellulose-associated xylan or any other tested polysaccharide substrate, meaning that the substrate rremains unknown. The polypeptide is AA14 family lytic polysaccharide monooxygenase A (Trametes coccinea (strain BRFM310) (Pycnoporus coccineus)).